The chain runs to 89 residues: Co-chaperonin GroES (89 aa).

It belongs to the GroES chaperonin family. As to quaternary structure, heptamer of 7 subunits arranged in a ring. Interacts with the chaperonin GroEL.

The protein localises to the cytoplasm. Together with the chaperonin GroEL, plays an essential role in assisting protein folding. The GroEL-GroES system forms a nano-cage that allows encapsulation of the non-native substrate proteins and provides a physical environment optimized to promote and accelerate protein folding. GroES binds to the apical surface of the GroEL ring, thereby capping the opening of the GroEL channel. The sequence is that of Co-chaperonin GroES from Kosmotoga olearia (strain ATCC BAA-1733 / DSM 21960 / TBF 19.5.1).